The chain runs to 538 residues: Phosphoenolpyruvate carboxykinase (ATP) (538 aa).

Residues Arg64, Tyr205, and Lys211 each coordinate substrate. Residues Lys211, His230, and 246–254 (GLSGTGKTT) contribute to the ATP site. Mn(2+)-binding residues include Lys211 and His230. Asp267 lines the Mn(2+) pocket. Residues Glu295, Arg331, 447 to 448 (RI), and Thr453 contribute to the ATP site. Arg331 contributes to the substrate binding site.

Belongs to the phosphoenolpyruvate carboxykinase (ATP) family. In terms of assembly, monomer. It depends on Mn(2+) as a cofactor.

It localises to the cytoplasm. It carries out the reaction oxaloacetate + ATP = phosphoenolpyruvate + ADP + CO2. The protein operates within carbohydrate biosynthesis; gluconeogenesis. In terms of biological role, involved in the gluconeogenesis. Catalyzes the conversion of oxaloacetate (OAA) to phosphoenolpyruvate (PEP) through direct phosphoryl transfer between the nucleoside triphosphate and OAA. This is Phosphoenolpyruvate carboxykinase (ATP) from Mannheimia succiniciproducens (strain KCTC 0769BP / MBEL55E).